A 439-amino-acid polypeptide reads, in one-letter code: N5-carboxyaminoimidazole ribonucleotide synthase (439 aa).

ATP contacts are provided by residues K113, K160, 197–200 (EERV), E205, and 283–284 (NE). The ATP-grasp domain maps to 117–313 (RRRLAALGAA…QFEQHLRAVL (197 aa)).

Belongs to the PurK/PurT family. Homodimer.

It catalyses the reaction 5-amino-1-(5-phospho-beta-D-ribosyl)imidazole + hydrogencarbonate + ATP = 5-carboxyamino-1-(5-phospho-D-ribosyl)imidazole + ADP + phosphate + 2 H(+). It participates in purine metabolism; IMP biosynthesis via de novo pathway; 5-amino-1-(5-phospho-D-ribosyl)imidazole-4-carboxylate from 5-amino-1-(5-phospho-D-ribosyl)imidazole (N5-CAIR route): step 1/2. Its function is as follows. Catalyzes the ATP-dependent conversion of 5-aminoimidazole ribonucleotide (AIR) and HCO(3)(-) to N5-carboxyaminoimidazole ribonucleotide (N5-CAIR). The sequence is that of N5-carboxyaminoimidazole ribonucleotide synthase from Mycobacterium leprae (strain TN).